Here is a 732-residue protein sequence, read N- to C-terminus: Polyribonucleotide nucleotidyltransferase (732 aa).

Mg(2+)-binding residues include Asp516 and Asp522. Residues 582–642 (PSSHTITVHP…PKVIAACDYI (61 aa)) enclose the KH domain. One can recognise an S1 motif domain in the interval 659-726 (GDILKGKIKR…KGHKIELGLR (68 aa)).

The protein belongs to the polyribonucleotide nucleotidyltransferase family. Mg(2+) serves as cofactor.

The protein resides in the cytoplasm. It carries out the reaction RNA(n+1) + phosphate = RNA(n) + a ribonucleoside 5'-diphosphate. In terms of biological role, involved in mRNA degradation. Catalyzes the phosphorolysis of single-stranded polyribonucleotides processively in the 3'- to 5'-direction. This chain is Polyribonucleotide nucleotidyltransferase, found in Nitratiruptor sp. (strain SB155-2).